The following is a 540-amino-acid chain: BTB/POZ domain-containing protein 6-A (540 aa).

The region spanning 138–208 (ADVHFIVGPP…MYSDEIELAP (71 aa)) is the BTB domain.

As to quaternary structure, interacts with cul3. Interacts (via BTB domain) with zbtb16/plzf. Expressed in the developing central nervous system.

It is found in the cytoplasm. The protein resides in the nucleus. Adapter protein for the cul3 E3 ubiquitin-protein ligase complex. Promotes the export of zbtb16/plzf from the nucleus to the cytoplasm and targets zbtb16/plzf for ubiquitination and degradation. Up-regulates neurog1 expression and antagonizes zbtb16/plzf, to promote neurogenesis. In Danio rerio (Zebrafish), this protein is BTB/POZ domain-containing protein 6-A (btbd6a).